Reading from the N-terminus, the 380-residue chain is Cytochrome b (380 aa).

The next 4 membrane-spanning stretches (helical) occupy residues 33-53 (FGSLLGVCLIIQILTGLFLAM), 77-98 (WLIRYLHANGASMFFICLFIHV), 113-133 (WNIGIVLLLTTMATAFVGYVL), and 178-198 (FFAFHFILPFIITALVLVHLL). Heme b contacts are provided by histidine 83 and histidine 97. Residues histidine 182 and histidine 196 each contribute to the heme b site. Residue histidine 201 participates in a ubiquinone binding. The next 4 helical transmembrane spans lie at 226–246 (IKDLLGVLLLLMVLTILVLFF), 288–308 (LGGVXALXLSILILXXXPLLN), 320–340 (ITQVLYWIFXXNLXXXXXXXX), and 347–367 (XXXXXQIASICYXAIIIIFMP).

Belongs to the cytochrome b family. The cytochrome bc1 complex contains 11 subunits: 3 respiratory subunits (MT-CYB, CYC1 and UQCRFS1), 2 core proteins (UQCRC1 and UQCRC2) and 6 low-molecular weight proteins (UQCRH/QCR6, UQCRB/QCR7, UQCRQ/QCR8, UQCR10/QCR9, UQCR11/QCR10 and a cleavage product of UQCRFS1). This cytochrome bc1 complex then forms a dimer. Heme b is required as a cofactor.

The protein resides in the mitochondrion inner membrane. Functionally, component of the ubiquinol-cytochrome c reductase complex (complex III or cytochrome b-c1 complex) that is part of the mitochondrial respiratory chain. The b-c1 complex mediates electron transfer from ubiquinol to cytochrome c. Contributes to the generation of a proton gradient across the mitochondrial membrane that is then used for ATP synthesis. This chain is Cytochrome b (MT-CYB), found in Rhipidomys leucodactylus (White-footed climbing mouse).